A 122-amino-acid polypeptide reads, in one-letter code: Ribosome-binding factor A (122 aa).

This sequence belongs to the RbfA family. In terms of assembly, monomer. Binds 30S ribosomal subunits, but not 50S ribosomal subunits or 70S ribosomes.

The protein localises to the cytoplasm. In terms of biological role, one of several proteins that assist in the late maturation steps of the functional core of the 30S ribosomal subunit. Associates with free 30S ribosomal subunits (but not with 30S subunits that are part of 70S ribosomes or polysomes). Required for efficient processing of 16S rRNA. May interact with the 5'-terminal helix region of 16S rRNA. This Polaromonas sp. (strain JS666 / ATCC BAA-500) protein is Ribosome-binding factor A.